We begin with the raw amino-acid sequence, 707 residues long: Polyribonucleotide nucleotidyltransferase (707 aa).

The Mg(2+) site is built by D485 and D491. The 64-residue stretch at 552-615 (PRITVINIPK…AAIKWIKGIV (64 aa)) folds into the KH domain. Residues 621–689 (GEIYEGKVVK…DRGKVKLSMK (69 aa)) form the S1 motif domain.

Belongs to the polyribonucleotide nucleotidyltransferase family. It depends on Mg(2+) as a cofactor.

Its subcellular location is the cytoplasm. The catalysed reaction is RNA(n+1) + phosphate = RNA(n) + a ribonucleoside 5'-diphosphate. In terms of biological role, involved in mRNA degradation. Catalyzes the phosphorolysis of single-stranded polyribonucleotides processively in the 3'- to 5'-direction. The sequence is that of Polyribonucleotide nucleotidyltransferase from Rhodospirillum centenum (strain ATCC 51521 / SW).